Reading from the N-terminus, the 157-residue chain is Small ribosomal subunit protein bS6 (157 aa).

Residues 96 to 151 show a composition bias toward basic and acidic residues; it reads HEEGPSAMMRKADRDRDRDERGGGGFRGDREGGFRGDREGGGFRGDRGPRRPRDDA. The tract at residues 96-157 is disordered; that stretch reads HEEGPSAMMR…RDDAPAATEE (62 aa).

It belongs to the bacterial ribosomal protein bS6 family.

Its function is as follows. Binds together with bS18 to 16S ribosomal RNA. The chain is Small ribosomal subunit protein bS6 from Rhodopseudomonas palustris (strain BisA53).